The primary structure comprises 331 residues: Probable staphylococcal-like nuclease CAN1 (331 aa).

The N-myristoyl glycine moiety is linked to residue Gly-2. Cys-10 carries the S-palmitoyl cysteine lipid modification. A TNase-like domain is found at 136–313 (HTLPVDAKAV…QSGRKGLWAA (178 aa)). Asp-149 serves as a coordination point for Ca(2+). Arg-220 is an active-site residue. Asp-225 serves as a coordination point for Ca(2+). Catalysis depends on residues Glu-228 and Arg-262. The interval 306–331 (GRKGLWAASRPQKPWEWRRDKRNGTA) is disordered. A compositionally biased stretch (basic and acidic residues) spans 318 to 331 (KPWEWRRDKRNGTA).

Belongs to the thermonuclease family. The cofactor is Ca(2+).

The protein resides in the cell membrane. Functionally, enzyme that catalyzes the hydrolysis of both DNA and RNA at the 5' position of the phosphodiester bond. This Oryza sativa subsp. japonica (Rice) protein is Probable staphylococcal-like nuclease CAN1.